A 59-amino-acid polypeptide reads, in one-letter code: Lantipeptide Flvbeta.f (59 aa).

The propeptide at 1–27 (MEKMNNIAGITPENELDEMFDDSVVGA) is cleaved by FlvT. 2 positions are modified to 2,3-didehydrobutyrine; by FlvM2: Thr-31 and Thr-32. 2 consecutive cross-links (beta-methyllanthionine (Thr-Cys); by FlvM2) follow at residues 41–47 (TKNPQIC) and 53–56 (TVKC).

In terms of processing, contains DL-beta-methyllanthionine, when coepressed in E.coli with the flavecin synthetase FlvM2.

The protein localises to the secreted. Functionally, lanthionine-containing peptide that does probably not show antibacterial activity, since its analog [+7]Flvbeta.f does not show antibacterial activity against M.luteus. Also does not show antibiotic activity when tested with [Del2]Flvalpha.a, an analog of Flvalpha.a, which is encoded by the same operon than Flvbeta.f. The bactericidal activity of lantibiotics is based on depolarization of energized bacterial cytoplasmic membranes, initiated by the formation of aqueous transmembrane pores. The polypeptide is Lantipeptide Flvbeta.f (Ruminococcus flavefaciens).